Here is a 371-residue protein sequence, read N- to C-terminus: Histidinol-phosphate aminotransferase (371 aa).

Lysine 228 carries the post-translational modification N6-(pyridoxal phosphate)lysine.

This sequence belongs to the class-II pyridoxal-phosphate-dependent aminotransferase family. Histidinol-phosphate aminotransferase subfamily. As to quaternary structure, homodimer. Pyridoxal 5'-phosphate serves as cofactor.

It catalyses the reaction L-histidinol phosphate + 2-oxoglutarate = 3-(imidazol-4-yl)-2-oxopropyl phosphate + L-glutamate. Its pathway is amino-acid biosynthesis; L-histidine biosynthesis; L-histidine from 5-phospho-alpha-D-ribose 1-diphosphate: step 7/9. In Thermosynechococcus vestitus (strain NIES-2133 / IAM M-273 / BP-1), this protein is Histidinol-phosphate aminotransferase.